The following is a 338-amino-acid chain: Heat-inducible transcription repressor HrcA (338 aa).

It belongs to the HrcA family.

Functionally, negative regulator of class I heat shock genes (grpE-dnaK-dnaJ and groELS operons). Prevents heat-shock induction of these operons. The protein is Heat-inducible transcription repressor HrcA of Nitrosomonas eutropha (strain DSM 101675 / C91 / Nm57).